Reading from the N-terminus, the 468-residue chain is Probable Xaa-Pro aminopeptidase pepP (468 aa).

Aspartate 264, aspartate 275, glutamate 398, and glutamate 438 together coordinate Mn(2+).

It belongs to the peptidase M24B family. It depends on Mn(2+) as a cofactor.

The enzyme catalyses Release of any N-terminal amino acid, including proline, that is linked to proline, even from a dipeptide or tripeptide.. In terms of biological role, catalyzes the removal of a penultimate prolyl residue from the N-termini of peptides. In Talaromyces stipitatus (strain ATCC 10500 / CBS 375.48 / QM 6759 / NRRL 1006) (Penicillium stipitatum), this protein is Probable Xaa-Pro aminopeptidase pepP (pepP).